The primary structure comprises 120 residues: NAD(P)H-quinone oxidoreductase subunit 3, chloroplastic (120 aa).

3 helical membrane-spanning segments follow: residues 9-29 (IFWAFLIISSAIPVLAFLISG), 64-84 (MFALVFVVFDVETVFLYPWAM), and 88-108 (VLGVSAFIEAFIFVLILILGL).

Belongs to the complex I subunit 3 family. NDH is composed of at least 16 different subunits, 5 of which are encoded in the nucleus.

It localises to the plastid. Its subcellular location is the chloroplast thylakoid membrane. The enzyme catalyses a plastoquinone + NADH + (n+1) H(+)(in) = a plastoquinol + NAD(+) + n H(+)(out). It carries out the reaction a plastoquinone + NADPH + (n+1) H(+)(in) = a plastoquinol + NADP(+) + n H(+)(out). In terms of biological role, NDH shuttles electrons from NAD(P)H:plastoquinone, via FMN and iron-sulfur (Fe-S) centers, to quinones in the photosynthetic chain and possibly in a chloroplast respiratory chain. The immediate electron acceptor for the enzyme in this species is believed to be plastoquinone. Couples the redox reaction to proton translocation, and thus conserves the redox energy in a proton gradient. The chain is NAD(P)H-quinone oxidoreductase subunit 3, chloroplastic from Lobularia maritima (Sweet alyssum).